Consider the following 141-residue polypeptide: MAARLCCHLDSARDVLLLRPFGPQSSGPSFPRPAAGSAASSASSPSPSDESDLPLGRLPACFASASGPCCLVFTCADLRTMDSTVNFVSWHANRQLGMPSKDLWTPYIKDQLLTKWEEGSIDPRLSIFVLGGCRHKCMRLL.

Over residues 25-48 the composition is skewed to low complexity; sequence SSGPSFPRPAAGSAASSASSPSPS. The disordered stretch occupies residues 25 to 52; the sequence is SSGPSFPRPAAGSAASSASSPSPSDESD. Residues 68-113 are mitochondrial targeting sequence; that stretch reads PCCLVFTCADLRTMDSTVNFVSWHANRQLGMPSKDLWTPYIKDQLL.

The protein belongs to the orthohepadnavirus protein X family. In terms of assembly, may form homodimer. May interact with host CEBPA, CFLAR, CREB1, DDB1, E4F1, HBXIP, HSPD1/HSP60, NFKBIA, POLR2E and SMAD4. Interacts with host SMC5-SMC6 complex and induces its degradation. Interacts with host TRPC4AP; leading to prevent ubiquitination of TRPC4AP. Interacts with host PLSCR1; this interaction promotes ubiquitination and degradation of HBx and impairs HBx-mediated cell proliferation. A fraction may be phosphorylated in insect cells and HepG2 cells, a human hepatoblastoma cell line. Phosphorylated in vitro by host protein kinase C or mitogen-activated protein kinase. N-acetylated in insect cells.

Its subcellular location is the host cytoplasm. It localises to the host nucleus. The protein localises to the host mitochondrion. Its function is as follows. Multifunctional protein that plays a role in silencing host antiviral defenses and promoting viral transcription. Does not seem to be essential for HBV infection. May be directly involved in development of cirrhosis and liver cancer (hepatocellular carcinoma). Most of cytosolic activities involve modulation of cytosolic calcium. The effect on apoptosis is controversial depending on the cell types in which the studies have been conducted. May induce apoptosis by localizing in mitochondria and causing loss of mitochondrial membrane potential. May also modulate apoptosis by binding host CFLAR, a key regulator of the death-inducing signaling complex (DISC). Promotes viral transcription by using the host E3 ubiquitin ligase DDB1 to target the SMC5-SMC6 complex to proteasomal degradation. This host complex would otherwise bind to viral episomal DNA, and prevents its transcription. Moderately stimulates transcription of many different viral and cellular transcription elements. Promoters and enhancers stimulated by HBx contain DNA binding sites for NF-kappa-B, AP-1, AP-2, c-EBP, ATF/CREB, or the calcium-activated factor NF-AT. This is Protein X from Marmota monax (Woodchuck).